An 88-amino-acid polypeptide reads, in one-letter code: Protein MATERNALLY EXPRESSED GENE 1 (88 aa).

Residues 1 to 27 (MEYKKRVDALVFFSLLLLGYFAAHAHG) form the signal peptide. Asn36 is a glycosylation site (N-linked (GlcNAc...) asparagine). Cystine bridges form between Cys65–Cys87 and Cys68–Cys76.

Belongs to the MEG family. Post-translationally, glycosylated. Expressed exclusively in endosperm. Found in basal endosperm transfer cells.

Its subcellular location is the secreted. It localises to the cell wall. It is found in the cell membrane. The protein localises to the extracellular space. The protein resides in the extracellular matrix. Functionally, regulates maternal nutrient uptake, sucrose partitioning, and seed biomass yield. Necessary and sufficient for the establishment and differentiation of the endosperm nutrient transfer cells located at the mother:seed interface. Exclusive expression of the maternal allele at the early stages of endosperm development. The maternal allele is hypomethylated. At later stages, expression becomes biallelic. Regulated by the transcription factor MRP1. In Zea mays (Maize), this protein is Protein MATERNALLY EXPRESSED GENE 1 (MEG1).